A 278-amino-acid chain; its full sequence is NADPH-dependent 7-cyano-7-deazaguanine reductase (278 aa).

87-89 contacts substrate; it reads IES. 89-90 lines the NADPH pocket; the sequence is SK. Cys-185 acts as the Thioimide intermediate in catalysis. Asp-192 (proton donor) is an active-site residue. Position 224–225 (224–225) interacts with substrate; that stretch reads HE. 253-254 lines the NADPH pocket; sequence RG. The tract at residues 255–278 is disordered; sequence GLDINPYRSTNPTFSVQNHRSFRQ. A compositionally biased stretch (polar residues) spans 261 to 278; sequence YRSTNPTFSVQNHRSFRQ.

It belongs to the GTP cyclohydrolase I family. QueF type 2 subfamily. As to quaternary structure, homodimer.

It localises to the cytoplasm. The catalysed reaction is 7-aminomethyl-7-carbaguanine + 2 NADP(+) = 7-cyano-7-deazaguanine + 2 NADPH + 3 H(+). The protein operates within tRNA modification; tRNA-queuosine biosynthesis. Catalyzes the NADPH-dependent reduction of 7-cyano-7-deazaguanine (preQ0) to 7-aminomethyl-7-deazaguanine (preQ1). This is NADPH-dependent 7-cyano-7-deazaguanine reductase from Coxiella burnetii (strain Dugway 5J108-111).